A 258-amino-acid polypeptide reads, in one-letter code: Tryptophan synthase alpha chain (258 aa).

Catalysis depends on proton acceptor residues Glu-52 and Asp-63.

This sequence belongs to the TrpA family. As to quaternary structure, tetramer of two alpha and two beta chains.

The catalysed reaction is (1S,2R)-1-C-(indol-3-yl)glycerol 3-phosphate + L-serine = D-glyceraldehyde 3-phosphate + L-tryptophan + H2O. Its pathway is amino-acid biosynthesis; L-tryptophan biosynthesis; L-tryptophan from chorismate: step 5/5. In terms of biological role, the alpha subunit is responsible for the aldol cleavage of indoleglycerol phosphate to indole and glyceraldehyde 3-phosphate. This Streptococcus pneumoniae (strain JJA) protein is Tryptophan synthase alpha chain.